Here is a 49-residue protein sequence, read N- to C-terminus: uncharacterized protein (49 aa).

The chain crosses the membrane as a helical span at residues 6 to 28 (IYPLTVFYFFAIEMSVFCYYNWF).

It is found in the membrane. This is an uncharacterized protein from Saccharomyces cerevisiae (strain ATCC 204508 / S288c) (Baker's yeast).